We begin with the raw amino-acid sequence, 352 residues long: Uroporphyrinogen decarboxylase (352 aa).

Residues 26–30 (RQAGR), Asp76, Tyr153, Ser208, and His323 contribute to the substrate site.

The protein belongs to the uroporphyrinogen decarboxylase family. As to quaternary structure, homodimer.

Its subcellular location is the cytoplasm. The catalysed reaction is uroporphyrinogen III + 4 H(+) = coproporphyrinogen III + 4 CO2. The protein operates within porphyrin-containing compound metabolism; protoporphyrin-IX biosynthesis; coproporphyrinogen-III from 5-aminolevulinate: step 4/4. Its function is as follows. Catalyzes the decarboxylation of four acetate groups of uroporphyrinogen-III to yield coproporphyrinogen-III. The sequence is that of Uroporphyrinogen decarboxylase from Prochlorococcus marinus (strain NATL2A).